Here is a 217-residue protein sequence, read N- to C-terminus: Nucleoside diphosphate kinase homolog 5 (217 aa).

The interval 18 to 151 (ERTLALIKPD…REIRFMFPHS (134 aa)) is NDK.

Belongs to the NDK family.

The protein resides in the cell projection. Its subcellular location is the cilium. Its function is as follows. Functions as part of axonemal radial spoke complexes that play an important part in the motility of sperm and cilia. Does not seem to have nucleoside diphosphate kinase (NDPK) activity. Exhibits a 3'-5' exonuclease activity with a preference for single-stranded DNA, suggesting roles in DNA proofreading and repair. The chain is Nucleoside diphosphate kinase homolog 5 (nme5) from Danio rerio (Zebrafish).